Consider the following 414-residue polypeptide: Serine/threonine transporter SstT (414 aa).

Helical transmembrane passes span Gly-16 to Ser-36, Leu-46 to Val-66, Ile-84 to Phe-104, Ala-143 to Leu-163, Ala-180 to Val-200, Leu-219 to Phe-239, Met-300 to Val-320, and Val-332 to Ile-352.

This sequence belongs to the dicarboxylate/amino acid:cation symporter (DAACS) (TC 2.A.23) family.

The protein localises to the cell inner membrane. It carries out the reaction L-serine(in) + Na(+)(in) = L-serine(out) + Na(+)(out). It catalyses the reaction L-threonine(in) + Na(+)(in) = L-threonine(out) + Na(+)(out). Involved in the import of serine and threonine into the cell, with the concomitant import of sodium (symport system). The protein is Serine/threonine transporter SstT of Salmonella newport (strain SL254).